Consider the following 432-residue polypeptide: Adenylosuccinate lyase (432 aa).

N(6)-(1,2-dicarboxyethyl)-AMP is bound by residues R4–Y5, R67–D69, and T93–S94. The Proton donor/acceptor role is filled by H141. Q212 is a N(6)-(1,2-dicarboxyethyl)-AMP binding site. The active-site Proton donor/acceptor is S262. N(6)-(1,2-dicarboxyethyl)-AMP contacts are provided by residues S263, K268–N270, N276, and S307–I311.

It belongs to the lyase 1 family. Adenylosuccinate lyase subfamily. Homodimer and homotetramer. Residues from neighboring subunits contribute catalytic and substrate-binding residues to each active site.

It carries out the reaction N(6)-(1,2-dicarboxyethyl)-AMP = fumarate + AMP. The enzyme catalyses (2S)-2-[5-amino-1-(5-phospho-beta-D-ribosyl)imidazole-4-carboxamido]succinate = 5-amino-1-(5-phospho-beta-D-ribosyl)imidazole-4-carboxamide + fumarate. It participates in purine metabolism; AMP biosynthesis via de novo pathway; AMP from IMP: step 2/2. Its pathway is purine metabolism; IMP biosynthesis via de novo pathway; 5-amino-1-(5-phospho-D-ribosyl)imidazole-4-carboxamide from 5-amino-1-(5-phospho-D-ribosyl)imidazole-4-carboxylate: step 2/2. Its function is as follows. Catalyzes two reactions in de novo purine nucleotide biosynthesis. Catalyzes the breakdown of 5-aminoimidazole- (N-succinylocarboxamide) ribotide (SAICAR or 2-[5-amino-1-(5-phospho-beta-D-ribosyl)imidazole-4-carboxamido]succinate) to 5-aminoimidazole-4-carboxamide ribotide (AICAR or 5-amino-1-(5-phospho-beta-D-ribosyl)imidazole-4-carboxamide) and fumarate, and of adenylosuccinate (ADS or N(6)-(1,2-dicarboxyethyl)-AMP) to adenosine monophosphate (AMP) and fumarate. This chain is Adenylosuccinate lyase (purB), found in Streptococcus mutans serotype c (strain ATCC 700610 / UA159).